A 785-amino-acid polypeptide reads, in one-letter code: Tripartite terminase subunit 1 (785 aa).

The C3H1-type zinc-finger motif lies at 197–225 (CAVCFEELCVTANQGATIARRLADRICNH). Disordered stretches follow at residues 433-452 (GGAA…GDRV) and 457-489 (GARG…GDIA). 696–703 (FASVYRCG) lines the ATP pocket.

The protein belongs to the herpesviridae TRM1 protein family. In terms of assembly, associates with TRM2 and TRM3 to form the tripartite terminase complex. Interacts with portal protein.

It localises to the host nucleus. In terms of biological role, component of the molecular motor that translocates viral genomic DNA in empty capsid during DNA packaging. Forms a tripartite terminase complex together with TRM2 and TRM3 in the host cytoplasm. Once the complex reaches the host nucleus, it interacts with the capsid portal vertex. This portal forms a ring in which genomic DNA is translocated into the capsid. TRM1 carries an endonuclease activity that plays an important role for the cleavage of concatemeric viral DNA into unit length genomes. This is Tripartite terminase subunit 1 from Human herpesvirus 1 (strain 17) (HHV-1).